The primary structure comprises 693 residues: Elongation factor G (693 aa).

A tr-type G domain is found at 8 to 282; sequence EKTRNIGIMA…AVIDYLPSPL (275 aa). Residues 17–24, 81–85, and 135–138 contribute to the GTP site; these read AHIDAGKT, DTPGH, and NKMD.

Belongs to the TRAFAC class translation factor GTPase superfamily. Classic translation factor GTPase family. EF-G/EF-2 subfamily.

The protein localises to the cytoplasm. Its function is as follows. Catalyzes the GTP-dependent ribosomal translocation step during translation elongation. During this step, the ribosome changes from the pre-translocational (PRE) to the post-translocational (POST) state as the newly formed A-site-bound peptidyl-tRNA and P-site-bound deacylated tRNA move to the P and E sites, respectively. Catalyzes the coordinated movement of the two tRNA molecules, the mRNA and conformational changes in the ribosome. This chain is Elongation factor G, found in Staphylococcus carnosus (strain TM300).